The chain runs to 236 residues: uncharacterized protein (236 aa).

A disordered region spans residues 1 to 73; sequence MEPGGSENAA…GGGWGWGNTQ (73 aa).

This is an uncharacterized protein from Homo sapiens (Human).